A 605-amino-acid chain; its full sequence is DNA primase (605 aa).

The CHC2-type zinc-finger motif lies at 37 to 61; sequence CPFHADKNPSMHINPIKGFYHCFAC. The region spanning 248 to 329 is the Toprim domain; sequence KEIIVCEGYM…DGKVAILQGG (82 aa). Positions 254, 298, and 300 each coordinate Mg(2+).

It belongs to the DnaG primase family. In terms of assembly, monomer. Interacts with DnaB. Zn(2+) serves as cofactor. Mg(2+) is required as a cofactor.

The catalysed reaction is ssDNA + n NTP = ssDNA/pppN(pN)n-1 hybrid + (n-1) diphosphate.. Its function is as follows. RNA polymerase that catalyzes the synthesis of short RNA molecules used as primers for DNA polymerase during DNA replication. The protein is DNA primase of Campylobacter jejuni subsp. jejuni serotype O:2 (strain ATCC 700819 / NCTC 11168).